The chain runs to 375 residues: Aldehyde reductase FrzD (375 aa).

Residues Ala-61, Gln-103, and His-171 each contribute to the FMN site. The active-site Proton donor is Tyr-176. 3 residues coordinate FMN: Lys-223, Gly-294, and Arg-319.

The protein belongs to the NADH:flavin oxidoreductase/NADH oxidase family. FMN serves as cofactor.

The enzyme catalyses (1S,4S)-4-[(4-hydroxyphenyl)methyl]-2,5-diazaspiro[bicyclo[3.2.1]octane-6,1'-cyclohexane]-2',5'-dien-4'-one + 2 NADPH + 2 H(+) = (1S,4S)-4-[(4-hydroxyphenyl)methyl]-2,5-diazaspiro[bicyclo[3.2.1]octane-6,1'-cyclohexan]-4'-one + 2 NADP(+). It functions in the pathway alkaloid biosynthesis; ergot alkaloid biosynthesis. Functionally, aldehyde reductase; part of the gene cluster that mediates the biosynthesis of the alkaloid (-)-FR901483, a potent immunosuppressant that shows efficacy in animal models and a probable inhibitor of purine nucleotide biosynthesis by targeting phosphoribosylpyrophosphate amidotransferase (PPAT). Within the pathway, FrzD reduces the dienone portion of the pathway intermediates to cyclohexanone. The biosynthesis of (-)-FR901483 starts with the condensation of two L-tyrosines to yield (S,S)-dityrosyl-piperazine. This process occurs in 3 steps with the non-canonical nonribosomal peptide synthetase FrzA catalyzing the reduction of L-tyrosine into L-tyrosinal, the spontaneous condensation of 2 L-tyrosinal units, and the subsequent reduction by the NmrA-like family domain-containing oxidoreductase FrzB. The cytochrome P450 monooxygenase FrzC then performs coupling between N10 and C1' to morph the piperazine into a 1,4-diazabicyclo[3.2.1]octane spiro-fused to a 2,5-cyclohexadienone. The dienone portion is further reduced to cyclohexanone by the flavin-dependent reductase FrzD. The methyltranserases (MTs) FrzE and FrzF are then involved in the methylation at the C10' amine and the C4 phenolic oxygen, respectively. The order of the two MTs appear to be interchangeable. Cleavage of the C9-N10' bond by the dioxygenase FrzG then leads to formation of a conjugated iminium. In addition to the oxidation of C9, an additional dehydrogenation between C7 and C8 can occur to give a likely shunt product. The next biosynthetic step is the intramolecular aldol condensation catalyzed by the newly identified aldolase FrzH to yield an aza-tricyclic product with the formation of a C9-C3' bond. The short-chain dehydrogenase/reductase FrzI then produces dephospho-(-)-FR901483 that is phosphorylated at C4'-OH into (-)-FR901483 by the phosphotransferase FrzJ. The only unassigned enzyme in the cluster is the second cytochrome P450 monooxygenase FrzL. This Cladobotryum sp protein is Aldehyde reductase FrzD.